The chain runs to 251 residues: ATP synthase delta chain, chloroplastic (251 aa).

Residues 1-64 (MASLQHTTAS…STGGALGARM (64 aa)) constitute a chloroplast transit peptide.

This sequence belongs to the ATPase delta chain family. In terms of assembly, F-type ATPases have 2 components, CF(1) - the catalytic core - and CF(0) - the membrane proton channel. CF(1) has five subunits: alpha(3), beta(3), gamma(1), delta(1), epsilon(1). CF(0) has three main subunits: a, b and c.

Its subcellular location is the plastid. It localises to the chloroplast thylakoid membrane. This protein seems to be part of the stalk that links CF(0) to CF(1). It either transmits conformational changes from CF(0) into CF(1) or is implicated in proton conduction. This chain is ATP synthase delta chain, chloroplastic (ATPD), found in Pisum sativum (Garden pea).